Consider the following 631-residue polypeptide: Phosphomethylpyrimidine synthase (631 aa).

Residues Asn-239, Met-268, Tyr-297, His-333, 353 to 355, 394 to 397, and Glu-433 contribute to the substrate site; these read SRG and DGLR. Residue His-437 coordinates Zn(2+). Tyr-460 lines the substrate pocket. His-501 serves as a coordination point for Zn(2+). The [4Fe-4S] cluster site is built by Cys-581, Cys-584, and Cys-589.

Belongs to the ThiC family. As to quaternary structure, homodimer. [4Fe-4S] cluster is required as a cofactor.

It catalyses the reaction 5-amino-1-(5-phospho-beta-D-ribosyl)imidazole + S-adenosyl-L-methionine = 4-amino-2-methyl-5-(phosphooxymethyl)pyrimidine + CO + 5'-deoxyadenosine + formate + L-methionine + 3 H(+). Its pathway is cofactor biosynthesis; thiamine diphosphate biosynthesis. Catalyzes the synthesis of the hydroxymethylpyrimidine phosphate (HMP-P) moiety of thiamine from aminoimidazole ribotide (AIR) in a radical S-adenosyl-L-methionine (SAM)-dependent reaction. In Shigella dysenteriae serotype 1 (strain Sd197), this protein is Phosphomethylpyrimidine synthase.